Here is a 206-residue protein sequence, read N- to C-terminus: uncharacterized protein (206 aa).

Positions 81-132 (EEQQQQQHHVHGPGCSHGHHHDSHANDGHHDEHHDEHHDHVNPDDVEDEFPR) are disordered. Residues 82 to 96 (EQQQQQHHVHGPGCS) show a composition bias toward low complexity. A compositionally biased stretch (basic and acidic residues) spans 103-123 (SHANDGHHDEHHDEHHDHVNP). Residues 150-166 (YLTALCLLPIIGSLFSI) form a helical membrane-spanning segment.

Its subcellular location is the membrane. This is an uncharacterized protein from Dictyostelium discoideum (Social amoeba).